Reading from the N-terminus, the 437-residue chain is UDP-N-acetylmuramate--L-alanine ligase (437 aa).

108-114 provides a ligand contact to ATP; the sequence is GAHGKTS.

Belongs to the MurCDEF family.

The protein resides in the cytoplasm. It catalyses the reaction UDP-N-acetyl-alpha-D-muramate + L-alanine + ATP = UDP-N-acetyl-alpha-D-muramoyl-L-alanine + ADP + phosphate + H(+). It participates in cell wall biogenesis; peptidoglycan biosynthesis. Cell wall formation. The polypeptide is UDP-N-acetylmuramate--L-alanine ligase (Staphylococcus carnosus (strain TM300)).